Here is a 292-residue protein sequence, read N- to C-terminus: Acetyl-coenzyme A carboxylase carboxyl transferase subunit beta (292 aa).

The CoA carboxyltransferase N-terminal domain occupies 29–292 (LWSKCPECGQ…HGCESRVASS (264 aa)). 4 residues coordinate Zn(2+): Cys-33, Cys-36, Cys-52, and Cys-55. A C4-type zinc finger spans residues 33-55 (CPECGQVVYRKDLLSNASVCGNC).

It belongs to the AccD/PCCB family. As to quaternary structure, acetyl-CoA carboxylase is a heterohexamer composed of biotin carboxyl carrier protein (AccB), biotin carboxylase (AccC) and two subunits each of ACCase subunit alpha (AccA) and ACCase subunit beta (AccD). Requires Zn(2+) as cofactor.

It localises to the cytoplasm. The catalysed reaction is N(6)-carboxybiotinyl-L-lysyl-[protein] + acetyl-CoA = N(6)-biotinyl-L-lysyl-[protein] + malonyl-CoA. It participates in lipid metabolism; malonyl-CoA biosynthesis; malonyl-CoA from acetyl-CoA: step 1/1. Its function is as follows. Component of the acetyl coenzyme A carboxylase (ACC) complex. Biotin carboxylase (BC) catalyzes the carboxylation of biotin on its carrier protein (BCCP) and then the CO(2) group is transferred by the transcarboxylase to acetyl-CoA to form malonyl-CoA. The sequence is that of Acetyl-coenzyme A carboxylase carboxyl transferase subunit beta from Synechococcus sp. (strain CC9311).